A 315-amino-acid chain; its full sequence is Calumenin-B (315 aa).

Positions 1 to 19 (MEQWPLLFVVALCILQSSS) are cleaved as a signal peptide. A compositionally biased stretch (basic and acidic residues) spans 22-39 (MEKKDRVHHDAPLSNKDH). Residues 22–42 (MEKKDRVHHDAPLSNKDHDDE) are disordered. EF-hand domains are found at residues 68–103 (ESKE…AQRR), 104–139 (WIYE…YILD), 151–186 (QMMT…EEFD), 188–223 (MKDI…QNGD), 229–264 (WVKT…ADYD), and 265–300 (HAEA…FVGS). Ca(2+)-binding residues include D81, D83, D85, E92, D117, N119, D121, E128, D164, D166, D168, R170, E175, D201, N203, D205, E212, D242, N244, D246, R248, E253, D278, D280, D282, R284, and E289. A Prevents secretion from ER motif is present at residues 312-315 (HDEF).

This sequence belongs to the CREC family. As to quaternary structure, interacts with ggcx.

It is found in the endoplasmic reticulum membrane. The protein localises to the golgi apparatus. Its subcellular location is the secreted. The protein resides in the melanosome. It localises to the sarcoplasmic reticulum lumen. Functionally, involved in regulation of vitamin K-dependent carboxylation of multiple N-terminal glutamate residues. Seems to inhibit gamma-carboxylase ggcx. Binds 7 calcium ions with a low affinity. The protein is Calumenin-B (calub) of Danio rerio (Zebrafish).